A 404-amino-acid chain; its full sequence is O-antigen ligase (404 aa).

Transmembrane regions (helical) follow at residues 16 to 32 (IWNKALVFLFVATYFLD), 39 to 55 (HLIIILMVITAIYQVSR), 67 to 84 (SVFYSVAVLSLILVYSIL), 96 to 115 (FENTVLEGFLLYTLLIPVLL), 127 to 147 (VLFSFLTSLGLRCLAESILYI), 168 to 183 (SMVFLFPALLNIWLFR), 189 to 221 (LVFLVLSAIYLFFILGTLSRGAWLAVLIVGVLW), 228 to 246 (WKLIGVGAILLAIIGALVI), 324 to 343 (ILYIWFSAGILGLASLVYLY), 363 to 379 (YNAHLLLFLSFVGFYIV), and 385 to 401 (QVDIAQIGIITGFLLAL).

The protein belongs to the O-antigen ligase family.

It is found in the cell inner membrane. The catalysed reaction is a lipid-linked O antigen + a lipid A-core oligosaccharide = a lipopolysaccharide + a polyisoprenyl diphosphate.. Its pathway is bacterial outer membrane biogenesis; lipopolysaccharide biosynthesis. In terms of biological role, transferase involved in the biosynthesis of the lipopolysaccharide (LPS). Catalyzes the transfer of a polymerized O-antigen molecule from its polyprenyl diphosphate membrane anchor to a terminal sugar of the lipid A-core oligosaccharide, finalizing the biosynthesis of the lipopolysaccharide. May also be involved in a feedback mechanism to regulate O-unit synthesis, based on the availability of O units on the periplasmic face of the membrane. This chain is O-antigen ligase, found in Salmonella typhimurium (strain LT2 / SGSC1412 / ATCC 700720).